Reading from the N-terminus, the 361-residue chain is Chorismate synthase (361 aa).

The segment at 37 to 59 is disordered; the sequence is TEADLQHDLDRRRPGTSRYTTQR. A compositionally biased stretch (basic and acidic residues) spans 40 to 49; that stretch reads DLQHDLDRRR. The NADP(+) site is built by arginine 48 and arginine 54. Residues 125 to 127, 238 to 239, glycine 278, 293 to 297, and arginine 319 contribute to the FMN site; these read RSS, NA, and KPTSS.

The protein belongs to the chorismate synthase family. As to quaternary structure, homotetramer. Requires FMNH2 as cofactor.

The enzyme catalyses 5-O-(1-carboxyvinyl)-3-phosphoshikimate = chorismate + phosphate. The protein operates within metabolic intermediate biosynthesis; chorismate biosynthesis; chorismate from D-erythrose 4-phosphate and phosphoenolpyruvate: step 7/7. Catalyzes the anti-1,4-elimination of the C-3 phosphate and the C-6 proR hydrogen from 5-enolpyruvylshikimate-3-phosphate (EPSP) to yield chorismate, which is the branch point compound that serves as the starting substrate for the three terminal pathways of aromatic amino acid biosynthesis. This reaction introduces a second double bond into the aromatic ring system. The polypeptide is Chorismate synthase (Serratia proteamaculans (strain 568)).